The following is a 146-amino-acid chain: MSIISQIEACDFERLYEIEQQAHLVPWSFGTLKNNQGERYLNLKLIENNQIIGFAICQTVLDEATLFNIAILPTYQGCGFGKLLLGKLIFQLKEKGVQTLWLEVRESNSARFLYEKIGFNEVDIRKNYYPKPSGGRENAVVMACYL.

Residues 2–146 enclose the N-acetyltransferase domain; sequence SIISQIEACD…ENAVVMACYL (145 aa). Position 69 to 71 (69 to 71) interacts with acetyl-CoA; it reads IAI. Residue E103 is the Proton acceptor of the active site. Acetyl-CoA is bound at residue N108. Residue Y114 is the Proton donor of the active site.

The protein belongs to the acetyltransferase family. RimI subfamily.

Its subcellular location is the cytoplasm. It carries out the reaction N-terminal L-alanyl-[ribosomal protein bS18] + acetyl-CoA = N-terminal N(alpha)-acetyl-L-alanyl-[ribosomal protein bS18] + CoA + H(+). Functionally, acetylates the N-terminal alanine of ribosomal protein bS18. The chain is [Ribosomal protein bS18]-alanine N-acetyltransferase from Haemophilus influenzae (strain ATCC 51907 / DSM 11121 / KW20 / Rd).